The chain runs to 1465 residues: DNA polymerase III PolC-type (1465 aa).

An Exonuclease domain is found at 427 to 583 (YVVFDVETTG…YDAEATGRLL (157 aa)).

This sequence belongs to the DNA polymerase type-C family. PolC subfamily.

The protein resides in the cytoplasm. It catalyses the reaction DNA(n) + a 2'-deoxyribonucleoside 5'-triphosphate = DNA(n+1) + diphosphate. Its function is as follows. Required for replicative DNA synthesis. This DNA polymerase also exhibits 3' to 5' exonuclease activity. The sequence is that of DNA polymerase III PolC-type from Streptococcus pyogenes serotype M6 (strain ATCC BAA-946 / MGAS10394).